Consider the following 422-residue polypeptide: UPF0229 protein Spro_2732 (422 aa).

The span at 77-90 (PGNDHFVQNDRVER) shows a compositional bias: basic and acidic residues. The disordered stretch occupies residues 77–109 (PGNDHFVQNDRVERPQGGGGGGSGQGNASQDGE). Residues 92 to 101 (QGGGGGGSGQ) show a composition bias toward gly residues.

Belongs to the UPF0229 family.

This Serratia proteamaculans (strain 568) protein is UPF0229 protein Spro_2732.